We begin with the raw amino-acid sequence, 164 residues long: Phosphopantetheine adenylyltransferase (164 aa).

Residue S9 participates in substrate binding. Residues 9–10 and H17 each bind ATP; that span reads SF. Substrate contacts are provided by K41, L73, and R87. ATP is bound by residues E98 and 122–128; that span reads YSFLSSS.

It belongs to the bacterial CoaD family. Homohexamer. It depends on Mg(2+) as a cofactor.

Its subcellular location is the cytoplasm. The catalysed reaction is (R)-4'-phosphopantetheine + ATP + H(+) = 3'-dephospho-CoA + diphosphate. The protein operates within cofactor biosynthesis; coenzyme A biosynthesis; CoA from (R)-pantothenate: step 4/5. In terms of biological role, reversibly transfers an adenylyl group from ATP to 4'-phosphopantetheine, yielding dephospho-CoA (dPCoA) and pyrophosphate. The protein is Phosphopantetheine adenylyltransferase of Thermobifida fusca (strain YX).